The following is a 131-amino-acid chain: D-ribose pyranase (131 aa).

The active-site Proton donor is His20. Substrate-binding positions include Asp28, His98, and Tyr120–Asn122.

Belongs to the RbsD / FucU family. RbsD subfamily. As to quaternary structure, homodecamer.

The protein resides in the cytoplasm. It carries out the reaction beta-D-ribopyranose = beta-D-ribofuranose. It participates in carbohydrate metabolism; D-ribose degradation; D-ribose 5-phosphate from beta-D-ribopyranose: step 1/2. In terms of biological role, catalyzes the interconversion of beta-pyran and beta-furan forms of D-ribose. This Pediococcus pentosaceus (strain ATCC 25745 / CCUG 21536 / LMG 10740 / 183-1w) protein is D-ribose pyranase.